A 113-amino-acid polypeptide reads, in one-letter code: Integration host factor subunit alpha (113 aa).

Positions 88 to 113 are disordered; that stretch reads ALNGGVSDETEGADDDDDDEEGEGDE. The segment covering 95 to 113 has biased composition (acidic residues); it reads DETEGADDDDDDEEGEGDE.

The protein belongs to the bacterial histone-like protein family. Heterodimer of an alpha and a beta chain.

Its function is as follows. This protein is one of the two subunits of integration host factor, a specific DNA-binding protein that functions in genetic recombination as well as in transcriptional and translational control. This Anaeromyxobacter dehalogenans (strain 2CP-C) protein is Integration host factor subunit alpha.